We begin with the raw amino-acid sequence, 143 residues long: Envelope protein A28 homolog (143 aa).

Residues 1-21 (MNTVQILVVILITTALSFLVF) traverse the membrane as a helical; Signal-anchor for type II membrane protein segment. The Virion surface portion of the chain corresponds to 22 to 143 (QLWYYAENYE…LLRLLMANTS (122 aa)).

Belongs to the poxviridae A28 protein family. Contains two intramolecular disulfide bonds. They are created by the viral disulfide bond formation pathway, a poxvirus-specific pathway that operates on the cytoplasmic side of the MV membranes.

Its subcellular location is the virion membrane. Envelope protein required for virus entry into host cell and for cell-cell fusion (syncytium formation). In Amsacta (AmEPV), this protein is Envelope protein A28 homolog.